The chain runs to 660 residues: Cysteine--tRNA ligase, cytoplasmic (660 aa).

Positions 1–10 (MSENSSPKLE) are enriched in polar residues. Positions 1–20 (MSENSSPKLESTSAAAASTK) are disordered. Cys-65 is a binding site for Zn(2+). A 'HIGH' region motif is present at residues 67 to 77 (PTVYDASHMGH). Zn(2+)-binding residues include Cys-256, His-281, and Glu-285. The 'KMSKS' region signature appears at 314–318 (KMSKS). Lys-317 contacts ATP. Disordered regions lie at residues 563 to 584 (IEKK…KFEK) and 627 to 660 (QKEY…QSPQ). Positions 627–639 (QKEYDNQTKEHNN) are enriched in basic and acidic residues. The segment covering 643–660 (SLSTSTSSPTLTSTQSPQ) has biased composition (low complexity).

The protein belongs to the class-I aminoacyl-tRNA synthetase family. The cofactor is Zn(2+).

It is found in the cytoplasm. It carries out the reaction tRNA(Cys) + L-cysteine + ATP = L-cysteinyl-tRNA(Cys) + AMP + diphosphate. The polypeptide is Cysteine--tRNA ligase, cytoplasmic (cysS) (Dictyostelium discoideum (Social amoeba)).